The following is a 1327-amino-acid chain: Kinectin (1327 aa).

Residues 1 to 8 (MELYESTY) are Cytoplasmic-facing. A helical; Signal-anchor for type II membrane protein membrane pass occupies residues 9 to 29 (FIVLIPSVVITVIFLFFWLFM). The Lumenal portion of the chain corresponds to 30 to 1327 (KETLYDEVLA…EVNQQLTKET (1298 aa)). Disordered regions lie at residues 49–181 (STKT…EQDK) and 197–216 (LSHQDTKQEGGLGKKKGLSK). Asn-69 carries an N-linked (GlcNAc...) asparagine glycan. Composition is skewed to basic and acidic residues over residues 73 to 86 (RESDSEHVPRDFKL) and 111 to 135 (VRERQKKEKKQKPSLEEQVIKESDA). Phosphoserine is present on residues Ser-75 and Ser-77. Basic residues predominate over residues 163 to 173 (LKKKAGQKKSK). Residues 329–1327 (ELSGLLHQLQ…EVNQQLTKET (999 aa)) adopt a coiled-coil conformation. The N-linked (GlcNAc...) asparagine glycan is linked to Asn-1031. The residue at position 1060 (Ser-1060) is a Phosphoserine. Asn-1066 carries an N-linked (GlcNAc...) asparagine glycan. Ser-1290 is modified (phosphoserine).

The protein belongs to the kinectin family. In terms of tissue distribution, expressed in all tissues examined including 12-day embryo, adult heart, brain, ovary, kidney, lung, small intestine, spleen, thymus and pancreas.

The protein localises to the endoplasmic reticulum membrane. Its function is as follows. Receptor for kinesin thus involved in kinesin-driven vesicle motility. Accumulates in integrin-based adhesion complexes (IAC) upon integrin aggregation by fibronectin. The chain is Kinectin from Mus musculus (Mouse).